Here is a 526-residue protein sequence, read N- to C-terminus: Peptide chain release factor 3 (526 aa).

The 269-residue stretch at 9–277 (ERRRTFAIIS…AFAEYAPPPQ (269 aa)) folds into the tr-type G domain. GTP contacts are provided by residues 18–25 (SHPDAGKT), 86–90 (DTPGH), and 140–143 (NKLD).

This sequence belongs to the TRAFAC class translation factor GTPase superfamily. Classic translation factor GTPase family. PrfC subfamily.

The protein localises to the cytoplasm. In terms of biological role, increases the formation of ribosomal termination complexes and stimulates activities of RF-1 and RF-2. It binds guanine nucleotides and has strong preference for UGA stop codons. It may interact directly with the ribosome. The stimulation of RF-1 and RF-2 is significantly reduced by GTP and GDP, but not by GMP. The protein is Peptide chain release factor 3 of Methylococcus capsulatus (strain ATCC 33009 / NCIMB 11132 / Bath).